Here is a 302-residue protein sequence, read N- to C-terminus: 4-hydroxy-tetrahydrodipicolinate synthase (302 aa).

A pyruvate-binding site is contributed by T55. Catalysis depends on Y144, which acts as the Proton donor/acceptor. K172 (schiff-base intermediate with substrate) is an active-site residue. Pyruvate is bound at residue V214.

This sequence belongs to the DapA family. Homotetramer; dimer of dimers.

It is found in the cytoplasm. The catalysed reaction is L-aspartate 4-semialdehyde + pyruvate = (2S,4S)-4-hydroxy-2,3,4,5-tetrahydrodipicolinate + H2O + H(+). Its pathway is amino-acid biosynthesis; L-lysine biosynthesis via DAP pathway; (S)-tetrahydrodipicolinate from L-aspartate: step 3/4. Functionally, catalyzes the condensation of (S)-aspartate-beta-semialdehyde [(S)-ASA] and pyruvate to 4-hydroxy-tetrahydrodipicolinate (HTPA). In Parasynechococcus marenigrum (strain WH8102), this protein is 4-hydroxy-tetrahydrodipicolinate synthase.